The chain runs to 236 residues: Uridylate kinase (236 aa).

12 to 15 contacts ATP; the sequence is KLSG. The interval 20–25 is involved in allosteric activation by GTP; sequence GEKGFG. A UMP-binding site is contributed by Gly-54. Residues Gly-55 and Arg-59 each coordinate ATP. UMP is bound by residues Asp-72 and 133–140; that span reads TGNPYFST. Asn-161, Tyr-166, and Asp-169 together coordinate ATP.

It belongs to the UMP kinase family. In terms of assembly, homohexamer.

It localises to the cytoplasm. It carries out the reaction UMP + ATP = UDP + ADP. The protein operates within pyrimidine metabolism; CTP biosynthesis via de novo pathway; UDP from UMP (UMPK route): step 1/1. Allosterically activated by GTP. Inhibited by UTP. Its function is as follows. Catalyzes the reversible phosphorylation of UMP to UDP. The polypeptide is Uridylate kinase (Alkaliphilus metalliredigens (strain QYMF)).